We begin with the raw amino-acid sequence, 91 residues long: Elongation factor 1-beta (91 aa).

It belongs to the EF-1-beta/EF-1-delta family.

In terms of biological role, promotes the exchange of GDP for GTP in EF-1-alpha/GDP, thus allowing the regeneration of EF-1-alpha/GTP that could then be used to form the ternary complex EF-1-alpha/GTP/AAtRNA. This Metallosphaera sedula (strain ATCC 51363 / DSM 5348 / JCM 9185 / NBRC 15509 / TH2) protein is Elongation factor 1-beta.